A 365-amino-acid chain; its full sequence is Protein RecA (365 aa).

An ATP-binding site is contributed by 76–83 (GPESSGKT). The tract at residues 346–365 (DVPGSERDGDEDAGDMEASA) is disordered. Over residues 353 to 365 (DGDEDAGDMEASA) the composition is skewed to acidic residues.

It belongs to the RecA family.

Its subcellular location is the cytoplasm. In terms of biological role, can catalyze the hydrolysis of ATP in the presence of single-stranded DNA, the ATP-dependent uptake of single-stranded DNA by duplex DNA, and the ATP-dependent hybridization of homologous single-stranded DNAs. It interacts with LexA causing its activation and leading to its autocatalytic cleavage. This is Protein RecA from Parvibaculum lavamentivorans (strain DS-1 / DSM 13023 / NCIMB 13966).